The following is a 195-amino-acid chain: Adenylate kinase (195 aa).

10–15 (GAGKGT) is a binding site for ATP. Residues 30–59 (STGDMLRAAVAAGTPVGLKAKAVMDAGGLV) form an NMP region. AMP-binding positions include threonine 31, arginine 36, 57–59 (GLV), 85–88 (GFPR), and glutamine 92. An LID region spans residues 126-143 (NRAAEAQAKGEAVRKDDD). Arginine 127 contacts ATP. AMP is bound at residue arginine 150. Position 178 (alanine 178) interacts with ATP.

It belongs to the adenylate kinase family. Monomer.

Its subcellular location is the cytoplasm. It carries out the reaction AMP + ATP = 2 ADP. Its pathway is purine metabolism; AMP biosynthesis via salvage pathway; AMP from ADP: step 1/1. In terms of biological role, catalyzes the reversible transfer of the terminal phosphate group between ATP and AMP. Plays an important role in cellular energy homeostasis and in adenine nucleotide metabolism. This chain is Adenylate kinase, found in Xanthobacter autotrophicus (strain ATCC BAA-1158 / Py2).